Reading from the N-terminus, the 218-residue chain is Regulator of G-protein signaling 20 (218 aa).

Positions 1-10 (MGSERTEMRK) are enriched in basic and acidic residues. The segment at 1 to 26 (MGSERTEMRKRQMAATQETPGTAQAQ) is disordered. A compositionally biased stretch (polar residues) spans 14-26 (AATQETPGTAQAQ). The RGS domain occupies 92–208 (SFDKLMLTPA…MNSAIYKDLL (117 aa)).

Forms a complex with G(alpha)z/i2 subunits and mu-opioid receptors; the formation of this complex results in mu-opioid receptor desensitization. Interacts with OPRM1. Fatty acylated. Heavily palmitoylated in the cysteine string motif. Post-translationally, N- and O-glycosylated in synapsomal membranes. In terms of processing, sumoylated by SUMO1 and SUM02 in synaptosomes. The sumoylated forms act as a scaffold for sequestering mu-opioid receptor-activated G(alpha) subunits.

It localises to the membrane. Its subcellular location is the nucleus. The protein localises to the cytoplasm. In terms of biological role, inhibits signal transduction by increasing the GTPase activity of G protein alpha subunits thereby driving them into their inactive GDP-bound form. Binds selectively to G(z)-alpha and G(alpha)-i2 subunits, accelerates their GTPase activity and regulates their signaling activities. The G(z)-alpha activity is inhibited by the phosphorylation and palmitoylation of the G-protein. Negatively regulates mu-opioid receptor-mediated activation of the G-proteins. The sequence is that of Regulator of G-protein signaling 20 (RGS20) from Gallus gallus (Chicken).